Consider the following 1807-residue polypeptide: Vitellogenin-A2 (1807 aa).

A signal peptide spans 1 to 15 (MKGIVLALLLALAGS). Positions 24–664 (FSESKISVYN…SANTMFPVFI (641 aa)) constitute a Vitellogenin domain. Residues 953-974 (TSAEGASMMEDSSEMGPKKYSA) form a disordered region. Asparagine 1094 is a glycosylation site (N-linked (GlcNAc...) asparagine). Residues 1095 to 1320 (ETALYRSKQK…SSESSSSSSE (226 aa)) form a disordered region. Residues 1101–1111 (SKQKKKNKIHN) are compositionally biased toward basic residues. Positions 1112–1123 (RRLDAEVVEARK) are enriched in basic and acidic residues. The span at 1126-1163 (SSLSSSSSSSSSSSSSSSSSSSSSSSSSPSSSSSSSYS) shows a compositional bias: low complexity. The span at 1187-1198 (QNKKRNLQENRK) shows a compositional bias: basic and acidic residues. Residues 1205–1232 (SSSSSSSSSSSSSSSSSSSSSSSSSSSS) show a composition bias toward low complexity. A compositionally biased stretch (basic and acidic residues) spans 1233-1247 (EENRPHKNRQHDNKQ). 2 stretches are compositionally biased toward low complexity: residues 1263–1276 (SESS…SSSE) and 1309–1320 (SSSSESSSSSSE). Residues 1536–1714 (GECKVAQDQI…SWILPAESCS (179 aa)) form the VWFD domain. Intrachain disulfides connect cysteine 1538-cysteine 1677 and cysteine 1561-cysteine 1713.

As to expression, produced by the liver, secreted into the blood and then sequestered by receptor mediated endocytosis into growing oocytes, where it is generally cleaved, giving rise to the respective yolk components.

Precursor of the major egg-yolk proteins that are sources of nutrients during early development of oviparous organisms. This is Vitellogenin-A2 from Xenopus laevis (African clawed frog).